A 149-amino-acid polypeptide reads, in one-letter code: Myoglobin (149 aa).

Valine 2 bears the N-acetylvaline mark. The region spanning 2–143 (VDWEKVNSVW…ICSDIEKEYK (142 aa)) is the Globin domain. Histidine 89 serves as a coordination point for heme b.

It belongs to the globin family. Monomeric.

It is found in the cytoplasm. Its subcellular location is the sarcoplasm. The enzyme catalyses Fe(III)-heme b-[protein] + nitric oxide + H2O = Fe(II)-heme b-[protein] + nitrite + 2 H(+). The catalysed reaction is H2O2 + AH2 = A + 2 H2O. Its function is as follows. Monomeric heme protein which primary function is to store oxygen and facilitate its diffusion within muscle tissues. Reversibly binds oxygen through a pentacoordinated heme iron and enables its timely and efficient release as needed during periods of heightened demand. Depending on the oxidative conditions of tissues and cells, and in addition to its ability to bind oxygen, it also has a nitrite reductase activity whereby it regulates the production of bioactive nitric oxide. Under stress conditions, like hypoxia and anoxia, it also protects cells against reactive oxygen species thanks to its pseudoperoxidase activity. This chain is Myoglobin (mb), found in Mustelus antarcticus (Gummy shark).